Here is a 218-residue protein sequence, read N- to C-terminus: Grancalcin (218 aa).

EF-hand domains lie at 49 to 84 (SSAG…SGIS), 85 to 119 (GTYS…KELW), 120 to 155 (SALN…MGYR), and 156 to 191 (LSPQ…ALTD). Ca(2+) contacts are provided by Asp103, Asp105, Thr107, Lys109, Asp133, Asp135, Ser137, Thr139, and Glu144.

Homodimer. Interacts with SRI and LCP1.

The protein localises to the cytoplasm. It is found in the cytoplasmic granule membrane. Its function is as follows. Calcium-binding protein that may play a role in the adhesion of neutrophils to fibronectin. May play a role in the formation of focal adhesions. The chain is Grancalcin (GCA) from Pongo abelii (Sumatran orangutan).